The sequence spans 337 residues: uncharacterized protein (337 aa).

ATP is bound at residue 29 to 36 (GPKSSGKS).

Belongs to the archaeal ATPase family.

This is an uncharacterized protein from Methanocaldococcus jannaschii (strain ATCC 43067 / DSM 2661 / JAL-1 / JCM 10045 / NBRC 100440) (Methanococcus jannaschii).